Reading from the N-terminus, the 483-residue chain is Protein P55 (483 aa).

Residues 342 to 359 (LTPVMALIIILVYYSIYG) form a helical membrane-spanning segment.

The protein localises to the host membrane. This chain is Protein P55, found in Vitis vinifera (Grape).